The following is a 155-amino-acid chain: 6,7-dimethyl-8-ribityllumazine synthase (155 aa).

5-amino-6-(D-ribitylamino)uracil is bound by residues F23, 57–59 (AFE), and 81–83 (AVI). Position 86-87 (86-87 (ST)) interacts with (2S)-2-hydroxy-3-oxobutyl phosphate. Catalysis depends on H89, which acts as the Proton donor. F114 lines the 5-amino-6-(D-ribitylamino)uracil pocket. Residue R128 coordinates (2S)-2-hydroxy-3-oxobutyl phosphate.

Belongs to the DMRL synthase family.

It catalyses the reaction (2S)-2-hydroxy-3-oxobutyl phosphate + 5-amino-6-(D-ribitylamino)uracil = 6,7-dimethyl-8-(1-D-ribityl)lumazine + phosphate + 2 H2O + H(+). Its pathway is cofactor biosynthesis; riboflavin biosynthesis; riboflavin from 2-hydroxy-3-oxobutyl phosphate and 5-amino-6-(D-ribitylamino)uracil: step 1/2. Catalyzes the formation of 6,7-dimethyl-8-ribityllumazine by condensation of 5-amino-6-(D-ribitylamino)uracil with 3,4-dihydroxy-2-butanone 4-phosphate. This is the penultimate step in the biosynthesis of riboflavin. This is 6,7-dimethyl-8-ribityllumazine synthase from Dehalococcoides mccartyi (strain ATCC BAA-2100 / JCM 16839 / KCTC 5957 / BAV1).